The chain runs to 618 residues: Dihydroxy-acid dehydratase (618 aa).

Aspartate 81 contacts Mg(2+). Residue cysteine 122 participates in [2Fe-2S] cluster binding. Mg(2+) is bound by residues aspartate 123 and lysine 124. An N6-carboxylysine modification is found at lysine 124. Cysteine 195 is a binding site for [2Fe-2S] cluster. Glutamate 490 contributes to the Mg(2+) binding site. Serine 516 serves as the catalytic Proton acceptor.

Belongs to the IlvD/Edd family. Homodimer. It depends on [2Fe-2S] cluster as a cofactor. Mg(2+) is required as a cofactor.

It carries out the reaction (2R)-2,3-dihydroxy-3-methylbutanoate = 3-methyl-2-oxobutanoate + H2O. The catalysed reaction is (2R,3R)-2,3-dihydroxy-3-methylpentanoate = (S)-3-methyl-2-oxopentanoate + H2O. It participates in amino-acid biosynthesis; L-isoleucine biosynthesis; L-isoleucine from 2-oxobutanoate: step 3/4. It functions in the pathway amino-acid biosynthesis; L-valine biosynthesis; L-valine from pyruvate: step 3/4. Its function is as follows. Functions in the biosynthesis of branched-chain amino acids. Catalyzes the dehydration of (2R,3R)-2,3-dihydroxy-3-methylpentanoate (2,3-dihydroxy-3-methylvalerate) into 2-oxo-3-methylpentanoate (2-oxo-3-methylvalerate) and of (2R)-2,3-dihydroxy-3-methylbutanoate (2,3-dihydroxyisovalerate) into 2-oxo-3-methylbutanoate (2-oxoisovalerate), the penultimate precursor to L-isoleucine and L-valine, respectively. In Gluconobacter oxydans (strain 621H) (Gluconobacter suboxydans), this protein is Dihydroxy-acid dehydratase.